The sequence spans 223 residues: ATP synthase subunit a 1 (223 aa).

Transmembrane regions (helical) follow at residues 20–40 (QTIV…AFLT), 78–98 (YLSY…FTII), 107–127 (SLST…LYGI), 173–193 (VMII…LMSV), and 194–214 (LGLL…TVYI).

Belongs to the ATPase A chain family. F-type ATPases have 2 components, CF(1) - the catalytic core - and CF(0) - the membrane proton channel. CF(1) has five subunits: alpha(3), beta(3), gamma(1), delta(1), epsilon(1). CF(0) has four main subunits: a, b, b' and c.

It is found in the cell inner membrane. Functionally, key component of the proton channel; it plays a direct role in the translocation of protons across the membrane. The protein is ATP synthase subunit a 1 of Prosthecochloris aestuarii (strain DSM 271 / SK 413).